A 228-amino-acid polypeptide reads, in one-letter code: ATP-dependent dethiobiotin synthetase BioD 1 (228 aa).

13–18 contributes to the ATP binding site; sequence EVGKTV. Thr-17 lines the Mg(2+) pocket. Lys-38 is a catalytic residue. Residue Ser-42 participates in substrate binding. Residues Asp-55, 116–119, 176–177, and 205–207 contribute to the ATP site; these read EGAG, ND, and PWL. Mg(2+)-binding residues include Asp-55 and Glu-116.

This sequence belongs to the dethiobiotin synthetase family. In terms of assembly, homodimer. Mg(2+) serves as cofactor.

It localises to the cytoplasm. It catalyses the reaction (7R,8S)-7,8-diammoniononanoate + CO2 + ATP = (4R,5S)-dethiobiotin + ADP + phosphate + 3 H(+). The protein operates within cofactor biosynthesis; biotin biosynthesis; biotin from 7,8-diaminononanoate: step 1/2. In terms of biological role, catalyzes a mechanistically unusual reaction, the ATP-dependent insertion of CO2 between the N7 and N8 nitrogen atoms of 7,8-diaminopelargonic acid (DAPA, also called 7,8-diammoniononanoate) to form a ureido ring. In Salmonella typhi, this protein is ATP-dependent dethiobiotin synthetase BioD 1.